We begin with the raw amino-acid sequence, 330 residues long: Glycerol-3-phosphate dehydrogenase [NAD(P)+] (330 aa).

3 residues coordinate NADPH: tryptophan 11, arginine 33, and lysine 105. Sn-glycerol 3-phosphate is bound by residues lysine 105, glycine 133, and serine 135. An NADPH-binding site is contributed by alanine 137. Residues lysine 188, aspartate 241, serine 251, arginine 252, and asparagine 253 each contribute to the sn-glycerol 3-phosphate site. The active-site Proton acceptor is the lysine 188. NADPH is bound at residue arginine 252. NADPH is bound by residues valine 276 and glutamate 278.

It belongs to the NAD-dependent glycerol-3-phosphate dehydrogenase family.

The protein localises to the cytoplasm. The catalysed reaction is sn-glycerol 3-phosphate + NAD(+) = dihydroxyacetone phosphate + NADH + H(+). The enzyme catalyses sn-glycerol 3-phosphate + NADP(+) = dihydroxyacetone phosphate + NADPH + H(+). It functions in the pathway membrane lipid metabolism; glycerophospholipid metabolism. Catalyzes the reduction of the glycolytic intermediate dihydroxyacetone phosphate (DHAP) to sn-glycerol 3-phosphate (G3P), the key precursor for phospholipid synthesis. This chain is Glycerol-3-phosphate dehydrogenase [NAD(P)+], found in Acidovorax ebreus (strain TPSY) (Diaphorobacter sp. (strain TPSY)).